A 493-amino-acid polypeptide reads, in one-letter code: Isoniazid-induced protein IniC (493 aa).

The sequence is that of Isoniazid-induced protein IniC (iniC) from Mycobacterium tuberculosis (strain CDC 1551 / Oshkosh).